Here is a 100-residue protein sequence, read N- to C-terminus: Large ribosomal subunit protein uL23 (100 aa).

Belongs to the universal ribosomal protein uL23 family. In terms of assembly, part of the 50S ribosomal subunit. Contacts protein L29, and trigger factor when it is bound to the ribosome.

One of the early assembly proteins it binds 23S rRNA. One of the proteins that surrounds the polypeptide exit tunnel on the outside of the ribosome. Forms the main docking site for trigger factor binding to the ribosome. This is Large ribosomal subunit protein uL23 from Mycolicibacterium paratuberculosis (strain ATCC BAA-968 / K-10) (Mycobacterium paratuberculosis).